The chain runs to 179 residues: Large ribosomal subunit protein uL5 (179 aa).

It belongs to the universal ribosomal protein uL5 family. In terms of assembly, part of the 50S ribosomal subunit; part of the 5S rRNA/L5/L18/L25 subcomplex. Contacts the 5S rRNA and the P site tRNA. Forms a bridge to the 30S subunit in the 70S ribosome.

Its function is as follows. This is one of the proteins that bind and probably mediate the attachment of the 5S RNA into the large ribosomal subunit, where it forms part of the central protuberance. In the 70S ribosome it contacts protein S13 of the 30S subunit (bridge B1b), connecting the 2 subunits; this bridge is implicated in subunit movement. Contacts the P site tRNA; the 5S rRNA and some of its associated proteins might help stabilize positioning of ribosome-bound tRNAs. This is Large ribosomal subunit protein uL5 from Rickettsia bellii (strain OSU 85-389).